The primary structure comprises 317 residues: L-lactate dehydrogenase (317 aa).

Residues valine 17, aspartate 38, lysine 43, and 82-83 (GA) each bind NAD(+). Residues glutamine 85, arginine 91, and 123–126 (NPVD) contribute to the substrate site. NAD(+) contacts are provided by residues 121–123 (VAN) and serine 146. Position 151-154 (151-154 (DSAR)) interacts with substrate. Beta-D-fructose 1,6-bisphosphate-binding residues include arginine 156 and histidine 171. Histidine 178 serves as the catalytic Proton acceptor. Tyrosine 224 carries the post-translational modification Phosphotyrosine. Threonine 233 is a substrate binding site.

Belongs to the LDH/MDH superfamily. LDH family. In terms of assembly, homotetramer.

Its subcellular location is the cytoplasm. It catalyses the reaction (S)-lactate + NAD(+) = pyruvate + NADH + H(+). It participates in fermentation; pyruvate fermentation to lactate; (S)-lactate from pyruvate: step 1/1. Allosterically activated by fructose 1,6-bisphosphate (FBP). Its function is as follows. Catalyzes the conversion of lactate to pyruvate. The polypeptide is L-lactate dehydrogenase (Moorella thermoacetica (strain ATCC 39073 / JCM 9320)).